The following is a 435-amino-acid chain: Putative magnesium transporter MRS2-H (435 aa).

Residues 19–54 (FSSSPESRRCRSVHRVPSRPRPPLAPPARVMGKGNS) are disordered. 2 helical membrane passes run 369-389 (LTLI…AAFA) and 408-428 (FVGA…TYAW).

The protein belongs to the CorA metal ion transporter (MIT) (TC 1.A.35.5) family.

The protein resides in the membrane. Putative magnesium transporter. The sequence is that of Putative magnesium transporter MRS2-H (MRS2-H) from Oryza sativa subsp. indica (Rice).